We begin with the raw amino-acid sequence, 557 residues long: uncharacterized protein (557 aa).

An N-terminal signal peptide occupies residues 1-30 (MAPRRRRHTRIAGLRVVGTATLVAATTLTA). Cysteine 31 is lipidated: N-palmitoyl cysteine. The S-diacylglycerol cysteine moiety is linked to residue cysteine 31.

To M.bovis Mb2616c and M.leprae ML0489.

Its subcellular location is the cell membrane. This is an uncharacterized protein from Mycobacterium tuberculosis (strain CDC 1551 / Oshkosh).